An 89-amino-acid chain; its full sequence is Small ribosomal subunit protein bS16 (89 aa).

This sequence belongs to the bacterial ribosomal protein bS16 family.

The protein is Small ribosomal subunit protein bS16 of Gloeobacter violaceus (strain ATCC 29082 / PCC 7421).